The sequence spans 215 residues: Protein-L-isoaspartate O-methyltransferase (215 aa).

The active site involves serine 62.

It belongs to the methyltransferase superfamily. L-isoaspartyl/D-aspartyl protein methyltransferase family.

It localises to the cytoplasm. It carries out the reaction [protein]-L-isoaspartate + S-adenosyl-L-methionine = [protein]-L-isoaspartate alpha-methyl ester + S-adenosyl-L-homocysteine. Catalyzes the methyl esterification of L-isoaspartyl residues in peptides and proteins that result from spontaneous decomposition of normal L-aspartyl and L-asparaginyl residues. It plays a role in the repair and/or degradation of damaged proteins. This Ruegeria sp. (strain TM1040) (Silicibacter sp.) protein is Protein-L-isoaspartate O-methyltransferase.